The following is a 206-amino-acid chain: Amelogenin, Y isoform (206 aa).

An N-terminal signal peptide occupies residues 1–16 (MGTWILFACLVGAAFA). Residues 118–180 (VPGQQSMTPT…PPLPPMFPLR (63 aa)) are disordered. Residues 128-142 (QHHQPNLPLPAQQPF) show a composition bias toward low complexity. The segment covering 143 to 180 (QPQPVQPQPHQPMQPQPPVQPMQPLLPQPPLPPMFPLR) has biased composition (pro residues).

Belongs to the amelogenin family.

The protein resides in the secreted. The protein localises to the extracellular space. It localises to the extracellular matrix. Plays a role in biomineralization. Seems to regulate the formation of crystallites during the secretory stage of tooth enamel development. Thought to play a major role in the structural organization and mineralization of developing enamel. The polypeptide is Amelogenin, Y isoform (AMELY) (Homo sapiens (Human)).